A 598-amino-acid chain; its full sequence is Nuclear receptor subfamily 4immunitygroup A member 1 (598 aa).

Disordered regions lie at residues methionine 1–proline 44, tyrosine 131–phenylalanine 158, leucine 177–proline 206, and glycine 221–glycine 265. The segment covering serine 134–serine 145 has biased composition (low complexity). The interval arginine 171–serine 466 is required for nuclear import. Positions glutamate 264–threonine 339 form a DNA-binding region, nuclear receptor. 2 consecutive NR C4-type zinc fingers follow at residues cysteine 267–cysteine 287 and cysteine 303–cysteine 327. The segment at alanine 268–lysine 354 is required for binding NBRE-containing DNA. Residues alanine 299 to proline 361 are required for the interaction with RXRA. Serine 341 bears the Phosphoserine; by PKA mark. Residues serine 341–proline 361 are disordered. Residue serine 351 is modified to Phosphoserine. Positions serine 360–threonine 595 constitute an NR LBD domain. The segment at proline 521–glycine 544 is binds lipopolysaccharide. Residues proline 584–threonine 595 form an AF-2 region.

The protein belongs to the nuclear hormone receptor family. NR4 subfamily. As to quaternary structure, binds the NGFI-B response element (NBRE) as a monomer. Binds the Nur response element (NurRE), consisting of two inverse NBRE-related octanucleotide repeats separated by 6 base-pairs, as a dimer. Interacts (via N-terminus) with NLRP3 (via LRR repeat domain); the interaction is direct, requires binding of NR4A1/Nur77 to NBRE-containing dsDNA and lipopolysaccharide, and leads to non-canonical NLRP3 inflammasome activation. Interacts with GADD45GIP1. Interacts with STK11. Interacts with IFI27. Heterodimer (via DNA-binding domain) with RXRA (via C-terminus); DNA-binding of the heterodimer is enhanced by 9-cis retinoic acid. Competes for the RXRA interaction with EP300 and thereby attenuates EP300 mediated acetylation of RXRA. Interacts with NCOA1. Interacts with NCOA2. Interacts with NCOA3. Zn(2+) is required as a cofactor. Phosphorylated at Ser-351 by RPS6KA1 and RPS6KA3 in response to mitogenic or stress stimuli. Post-translationally, acetylated by p300/CBP, acetylation increases stability. Deacetylated by HDAC1. In terms of tissue distribution, fetal muscle and adult liver, brain and thyroid.

It is found in the nucleus. Its subcellular location is the cytoplasm. It localises to the cytosol. The protein localises to the mitochondrion. With respect to regulation, its transcription factor activity is activated by binding cytosporone B (Csn-B) via its ligand-binding (NR LBD) domain and stimulates recruitment of coactivators NCOA1 and NCOA2, but not NCOA3, to promoters. Csn-B-binding is also accompanied by its translocation to the mitochondrion. Its transcription factor activity is activated by corticotropin-releasing hormone (CRH) and forskolin. Not activated by binding cytosporone C (Csn-C). Orphan nuclear receptor. Binds the NGFI-B response element (NBRE) 5'-AAAGGTCA-3'. Binds 9-cis-retinoic acid outside of its ligand-binding (NR LBD) domain. Participates in energy homeostasis by sequestrating the kinase STK11 in the nucleus, thereby attenuating cytoplasmic AMPK activation. Regulates the inflammatory response in macrophages by regulating metabolic adaptations during inflammation, including repressing the transcription of genes involved in the citric acid cycle (TCA). Inhibits NF-kappa-B signaling by binding to low-affinity NF-kappa-B binding sites, such as at the IL2 promoter. May act concomitantly with NR4A2 in regulating the expression of delayed-early genes during liver regeneration. Plays a role in the vascular response to injury. In terms of biological role, in the cytosol, upon its detection of both bacterial lipopolysaccharide (LPS) and NBRE-containing mitochondrial DNA released by GSDMD pores during pyroptosis, it promotes non-canonical NLRP3 inflammasome activation by stimulating association of NLRP3 and NEK7. This Homo sapiens (Human) protein is Nuclear receptor subfamily 4immunitygroup A member 1 (NR4A1).